The sequence spans 299 residues: Ribosomal protein L11 methyltransferase (299 aa).

Positions 139, 163, 185, and 232 each coordinate S-adenosyl-L-methionine.

It belongs to the methyltransferase superfamily. PrmA family.

Its subcellular location is the cytoplasm. The catalysed reaction is L-lysyl-[protein] + 3 S-adenosyl-L-methionine = N(6),N(6),N(6)-trimethyl-L-lysyl-[protein] + 3 S-adenosyl-L-homocysteine + 3 H(+). In terms of biological role, methylates ribosomal protein L11. The polypeptide is Ribosomal protein L11 methyltransferase (Crocosphaera subtropica (strain ATCC 51142 / BH68) (Cyanothece sp. (strain ATCC 51142))).